The primary structure comprises 215 residues: Large ribosomal subunit protein uL16 (215 aa).

This sequence belongs to the universal ribosomal protein uL16 family. In terms of assembly, component of the small ribosomal subunit. Mature ribosomes consist of a small (40S) and a large (60S) subunit. The 40S subunit contains about 33 different proteins and 1 molecule of RNA (18S). The 60S subunit contains about 49 different proteins and 3 molecules of RNA (25S, 5.8S and 5S).

The polypeptide is Large ribosomal subunit protein uL16 (RPL10) (Euglena gracilis).